The following is a 271-amino-acid chain: Aminoglycoside 3'-phosphotransferase (271 aa).

Aspartate 198 serves as the catalytic Proton acceptor.

This sequence belongs to the aminoglycoside phosphotransferase family.

It carries out the reaction kanamycin A + ATP = kanamycin 3'-phosphate + ADP + H(+). Its function is as follows. Resistance to kanamycin and structurally-related aminoglycosides, including amikacin. The polypeptide is Aminoglycoside 3'-phosphotransferase (aphA1) (Escherichia coli).